Here is a 251-residue protein sequence, read N- to C-terminus: Maleate isomerase (251 aa).

Substrate is bound by residues Asn15, 81 to 83 (CLV), Tyr138, and Asn168. Cys81 acts as the Nucleophile in catalysis. The residue at position 81 (Cys81) is an S-(2-succinyl)cysteine. Residue Cys199 is the Proton donor of the active site. 200-201 (VQ) contacts substrate.

Belongs to the maleate isomerase family. Homodimer.

The enzyme catalyses maleate = fumarate. Catalyzes cis-trans isomerization of the C2-C3 double bond in maleate to yield fumarate. The protein is Maleate isomerase of Geobacillus stearothermophilus (Bacillus stearothermophilus).